The following is a 322-amino-acid chain: Tetraacyldisaccharide 4'-kinase (322 aa).

An ATP-binding site is contributed by 54–61; it reads SVGGTGKT.

This sequence belongs to the LpxK family.

The enzyme catalyses a lipid A disaccharide + ATP = a lipid IVA + ADP + H(+). Its pathway is glycolipid biosynthesis; lipid IV(A) biosynthesis; lipid IV(A) from (3R)-3-hydroxytetradecanoyl-[acyl-carrier-protein] and UDP-N-acetyl-alpha-D-glucosamine: step 6/6. Its function is as follows. Transfers the gamma-phosphate of ATP to the 4'-position of a tetraacyldisaccharide 1-phosphate intermediate (termed DS-1-P) to form tetraacyldisaccharide 1,4'-bis-phosphate (lipid IVA). This chain is Tetraacyldisaccharide 4'-kinase, found in Francisella tularensis subsp. tularensis (strain FSC 198).